Reading from the N-terminus, the 177-residue chain is Translationally-controlled tumor protein homolog (177 aa).

Residues 1 to 177 (MIIYRDLFSG…IKQGLVVEKC (177 aa)) form the TCTP domain.

Belongs to the TCTP family.

Its subcellular location is the cytoplasm. Functionally, involved in calcium binding and microtubule stabilization. This chain is Translationally-controlled tumor protein homolog, found in Trichinella pseudospiralis (Parasitic roundworm).